The chain runs to 864 residues: Leucine--tRNA ligase (864 aa).

A 'HIGH' region motif is present at residues 47-57 (PYPSGNLHMGH). The segment at 298–317 (SEQDRVADDRPKRGVATGGT) is disordered. The segment covering 299–309 (EQDRVADDRPK) has biased composition (basic and acidic residues). The short motif at 622-626 (KMSKS) is the 'KMSKS' region element. Lysine 625 is an ATP binding site.

This sequence belongs to the class-I aminoacyl-tRNA synthetase family.

It localises to the cytoplasm. It catalyses the reaction tRNA(Leu) + L-leucine + ATP = L-leucyl-tRNA(Leu) + AMP + diphosphate. In Synechococcus sp. (strain RCC307), this protein is Leucine--tRNA ligase.